The primary structure comprises 364 residues: Long-wave-sensitive opsin 1 (364 aa).

The Extracellular segment spans residues 1-52; that stretch reads MTQRWGPQRLAGGQPHAGLEDSTRASIFTYTNSNATRGPFEGPNYHIAPRWV. Ser-22 carries O-linked (GlcNAc) serine glycosylation. Asn-34 is a glycosylation site (N-linked (GlcNAc...) asparagine). Residues 53–77 traverse the membrane as a helical segment; that stretch reads YHVTSAWMIFVVIASVFTNGLVLAA. The Cytoplasmic segment spans residues 78 to 89; it reads TMKFKKLRHPLN. Residues 90–115 form a helical membrane-spanning segment; sequence WILVNLAVADLAETIIASTISVVNQI. Over 116–129 the chain is Extracellular; sequence YGYFVLGHPMCVLE. Cys-126 and Cys-203 are disulfide-bonded. A helical membrane pass occupies residues 130-149; that stretch reads GYTVSLCGITGLWSLAIISW. Over 150–168 the chain is Cytoplasmic; the sequence is ERWLVVCKPFGNVRFDAKL. A helical membrane pass occupies residues 169–192; sequence AIAGIAFSWIWAAVWTAPPIFGWS. The Extracellular portion of the chain corresponds to 193–218; that stretch reads RYWPHGLKTSCGPDVFSGSSYPGVQS. The helical transmembrane segment at 219 to 246 threads the bilayer; sequence YMIVLMITCCIIPLSVIVLCYLQVWLAI. Residues 247-268 are Cytoplasmic-facing; that stretch reads RAVAKQQKESESTQKAEKEVTR. Residues 269 to 292 form a helical membrane-spanning segment; that stretch reads MVMVMIFAYCVCWGPYTFFACFAA. Over 293 to 300 the chain is Extracellular; the sequence is AHPGYAFH. A helical transmembrane segment spans residues 301–325; the sequence is PLVAALPAYFAKSATIYNPIIYVFM. Lys-312 bears the N6-(retinylidene)lysine mark. Over 326 to 364 the chain is Cytoplasmic; the sequence is NRQFRNCIMQLFGKKVDDGSELSSASRTEASSVSSVSPA.

Belongs to the G-protein coupled receptor 1 family. Opsin subfamily. In terms of processing, phosphorylated on some or all of the serine and threonine residues present in the C-terminal region. As to expression, the three color pigments are found in the cone photoreceptor cells. Expressed in retina.

Its subcellular location is the membrane. Its function is as follows. Visual pigments are the light-absorbing molecules that mediate vision. They consist of an apoprotein, opsin, covalently linked to cis-retinal. The sequence is that of Long-wave-sensitive opsin 1 (OPN1LW) from Felis catus (Cat).